The primary structure comprises 656 residues: Squalene-hopene cyclase (656 aa).

A PFTB 1 repeat occupies 68–110 (EQKIANYLRRCQSREHWGWPVYYGGEFNISASVQAYFALKMTG). Asp396 serves as the catalytic Proton donor. PFTB repeat units lie at residues 417-459 (LDRA…ALLD), 485-525 (IERG…NASG), 533-582 (VLKC…GLMA), and 591-634 (VKRG…QFFP).

It belongs to the terpene cyclase/mutase family.

The catalysed reaction is squalene = hop-22(29)-ene. It catalyses the reaction squalene + H2O = hopan-22-ol. In terms of biological role, squalene cyclase that catalyzes the oxygen-independent cyclization of squalene into hopanoids, a class of cyclic triterpenoids including hop-22(29)-ene, hop-17(21)-ene, hop-21(22)-ene, and hopan-22-ol. The sequence is that of Squalene-hopene cyclase from Schizosaccharomyces japonicus (strain yFS275 / FY16936) (Fission yeast).